Reading from the N-terminus, the 422-residue chain is Adenylosuccinate synthetase (422 aa).

GTP is bound by residues 11–17 (GDEGKGK) and 39–41 (GHT). Asp-12 (proton acceptor) is an active-site residue. Residues Asp-12 and Gly-39 each contribute to the Mg(2+) site. IMP-binding positions include 12–15 (DEGK), 37–40 (NAGH), Thr-129, Arg-143, Asn-219, Thr-234, and Arg-298. The Proton donor role is filled by His-40. Residue 294–300 (VTTGRKR) participates in substrate binding. GTP contacts are provided by residues Arg-300, 326–328 (KLD), and 411–413 (GTG).

Belongs to the adenylosuccinate synthetase family. In terms of assembly, homodimer. Mg(2+) serves as cofactor.

Its subcellular location is the cytoplasm. It carries out the reaction IMP + L-aspartate + GTP = N(6)-(1,2-dicarboxyethyl)-AMP + GDP + phosphate + 2 H(+). Its pathway is purine metabolism; AMP biosynthesis via de novo pathway; AMP from IMP: step 1/2. Functionally, plays an important role in the de novo pathway and in the salvage pathway of purine nucleotide biosynthesis. Catalyzes the first committed step in the biosynthesis of AMP from IMP. This chain is Adenylosuccinate synthetase, found in Talaromyces stipitatus (strain ATCC 10500 / CBS 375.48 / QM 6759 / NRRL 1006) (Penicillium stipitatum).